Here is a 209-residue protein sequence, read N- to C-terminus: Imidazoleglycerol-phosphate dehydratase (209 aa).

It belongs to the imidazoleglycerol-phosphate dehydratase family.

It is found in the cytoplasm. The enzyme catalyses D-erythro-1-(imidazol-4-yl)glycerol 3-phosphate = 3-(imidazol-4-yl)-2-oxopropyl phosphate + H2O. Its pathway is amino-acid biosynthesis; L-histidine biosynthesis; L-histidine from 5-phospho-alpha-D-ribose 1-diphosphate: step 6/9. The polypeptide is Imidazoleglycerol-phosphate dehydratase (Microcystis aeruginosa (strain NIES-843 / IAM M-2473)).